Here is a 185-residue protein sequence, read N- to C-terminus: Ribosome-recycling factor (185 aa).

The protein belongs to the RRF family.

Its subcellular location is the cytoplasm. Its function is as follows. Responsible for the release of ribosomes from messenger RNA at the termination of protein biosynthesis. May increase the efficiency of translation by recycling ribosomes from one round of translation to another. The protein is Ribosome-recycling factor of Hamiltonella defensa subsp. Acyrthosiphon pisum (strain 5AT).